Reading from the N-terminus, the 554-residue chain is uncharacterized protein (554 aa).

4 disordered regions span residues 1–127 (MTTH…NYND), 139–173 (IEDD…SKAG), 293–395 (NNNN…PLSE), and 416–509 (FGFS…RKIR). 3 stretches are compositionally biased toward low complexity: residues 9–30 (SSSN…NNNI), 46–55 (DPTSSSSPTN), and 63–125 (SNSN…LINY). Positions 139–153 (IEDDEEYEEIGDEES) are enriched in acidic residues. Over residues 164–173 (NDSLNGSKAG) the composition is skewed to polar residues. Composition is skewed to low complexity over residues 293–387 (NNNN…CSSN), 416–449 (FGFS…SSIS), and 461–484 (SPPL…NNNH). Over residues 485 to 508 (HNNHHQNHHHQNHNHQHHSKKRKI) the composition is skewed to basic residues.

This is an uncharacterized protein from Dictyostelium discoideum (Social amoeba).